The primary structure comprises 233 residues: Octanoyltransferase (233 aa).

A BPL/LPL catalytic domain is found at 34–212 (PDRPDVLLLL…AFAQTFELDL (179 aa)). Substrate is bound by residues 76-83 (RGGEVTHH), 143-145 (AIG), and 156-158 (GFA). Cys-174 (acyl-thioester intermediate) is an active-site residue.

It belongs to the LipB family.

The protein localises to the cytoplasm. It carries out the reaction octanoyl-[ACP] + L-lysyl-[protein] = N(6)-octanoyl-L-lysyl-[protein] + holo-[ACP] + H(+). It functions in the pathway protein modification; protein lipoylation via endogenous pathway; protein N(6)-(lipoyl)lysine from octanoyl-[acyl-carrier-protein]: step 1/2. Its function is as follows. Catalyzes the transfer of endogenously produced octanoic acid from octanoyl-acyl-carrier-protein onto the lipoyl domains of lipoate-dependent enzymes. Lipoyl-ACP can also act as a substrate although octanoyl-ACP is likely to be the physiological substrate. The chain is Octanoyltransferase from Synechococcus elongatus (strain ATCC 33912 / PCC 7942 / FACHB-805) (Anacystis nidulans R2).